Consider the following 99-residue polypeptide: HssA/B-like protein 42 (99 aa).

The interval 1 to 29 (MTLFSSISSMSTSMSGSKSSISSFGSGTS) is disordered.

It belongs to the hssA/B family.

The protein is HssA/B-like protein 42 (hssl42) of Dictyostelium discoideum (Social amoeba).